The following is a 27-amino-acid chain: LICFNDFSPTARTLEYCQIGITTYNPS.

In terms of tissue distribution, expressed by the venom gland.

The protein localises to the secreted. Functionally, binds to muscle nicotinic acetylcholine receptor (nAChR) and inhibit acetylcholine from binding to the receptor, thereby impairing neuromuscular transmission. This Micrurus pyrrhocryptus (Coral snake) protein is Weak neurotoxin E3.